A 427-amino-acid chain; its full sequence is Glutamate-1-semialdehyde 2,1-aminomutase (427 aa).

Lys-268 is subject to N6-(pyridoxal phosphate)lysine.

The protein belongs to the class-III pyridoxal-phosphate-dependent aminotransferase family. HemL subfamily. The cofactor is pyridoxal 5'-phosphate.

The protein localises to the cytoplasm. It catalyses the reaction (S)-4-amino-5-oxopentanoate = 5-aminolevulinate. The protein operates within porphyrin-containing compound metabolism; protoporphyrin-IX biosynthesis; 5-aminolevulinate from L-glutamyl-tRNA(Glu): step 2/2. The polypeptide is Glutamate-1-semialdehyde 2,1-aminomutase (Methanococcus maripaludis (strain C7 / ATCC BAA-1331)).